Here is a 205-residue protein sequence, read N- to C-terminus: uncharacterized protein (205 aa).

The protein belongs to the peptidase C56 family.

This is an uncharacterized protein from Methanocaldococcus jannaschii (strain ATCC 43067 / DSM 2661 / JAL-1 / JCM 10045 / NBRC 100440) (Methanococcus jannaschii).